The primary structure comprises 272 residues: Aquaporin-11 (272 aa).

At Met-1–Thr-14 the chain is on the cytoplasmic side. Residues Cys-15–Ala-35 form a helical membrane-spanning segment. Residues Arg-36–Ala-47 are Lumenal-facing. The helical transmembrane segment at Phe-48–Leu-68 threads the bilayer. Topologically, residues Ser-69–His-75 are cytoplasmic. Residues Pro-76–Gly-96 form a helical membrane-spanning segment. Over Thr-97–Ala-167 the chain is Lumenal. An NPC motif is present at residues Asn-100–Cys-102. The helical transmembrane segment at Val-168–Val-188 threads the bilayer. Topologically, residues Arg-189 to His-195 are cytoplasmic. The chain crosses the membrane as a helical span at residues Leu-196 to Phe-216. Residues Asn-217–Ala-219 carry the NPA motif. At Asn-217–Gln-235 the chain is on the lumenal side. Residues Phe-236–Ser-256 traverse the membrane as a helical segment. Topologically, residues Phe-257–Glu-272 are cytoplasmic.

It belongs to the MIP/aquaporin (TC 1.A.8) family. AQP11/AQP12 subfamily. Homodimer; disulfide-linked. Homotetramer. Can also form homomultimer. Not glycosylated. As to expression, expressed in retina specifically at retinal Mueller glial cells.

It is found in the endoplasmic reticulum membrane. It localises to the cytoplasmic vesicle membrane. The protein resides in the cell membrane. It carries out the reaction H2O(in) = H2O(out). It catalyses the reaction glycerol(in) = glycerol(out). The enzyme catalyses H2O2(out) = H2O2(in). Channel protein that facilitates the transport of water, glycerol and hydrogen peroxide across membrane of cell or organelles guaranteeing intracellular homeostasis in several organes like liver, kidney and brain. In situation of stress, participates in endoplasmic reticulum (ER) homeostasis by regulating redox homeostasis through the transport of hydrogen peroxide across the endoplasmic reticulum membrane thereby regulating the oxidative stress through the NADPH oxidase 2 pathway. Plays a role by maintaining an environment suitable for translation or protein foldings in the ER lumen namely by participating in the PKD1 glycosylation processing resulting in regulation of PKD1 membrane trafficking thereby preventing the accumulation of unfolding protein in ER. Plays a role in the proximal tubule function by regulating its endosomal acidification. May play a role in postnatal kidney development. This chain is Aquaporin-11, found in Equus caballus (Horse).